A 752-amino-acid polypeptide reads, in one-letter code: Coiled-coil domain-containing protein 157 (752 aa).

The segment covering 135 to 154 (QQPLPQKGANQRETPTSKPT) has biased composition (polar residues). Disordered stretches follow at residues 135–163 (QQPL…ARSP) and 316–336 (QALK…EQCL). Coiled-coil stretches lie at residues 276 to 544 (AAEQ…LLVA) and 579 to 615 (DHME…VAQQ). Residues 316-329 (QALKQEQGARRRQA) are compositionally biased toward basic and acidic residues. Disordered regions lie at residues 620-707 (LIPQ…QPSK) and 731-752 (RKRL…ERPM). The segment covering 628 to 648 (SPSSKGTQGATPPVQAKSTSP) has biased composition (polar residues). Residues 671-692 (TSPPRQPCTSPPRQPCTSPPRQ) show a composition bias toward pro residues. Polar residues predominate over residues 693–707 (PCTSPSRQPCSQPSK).

The sequence is that of Coiled-coil domain-containing protein 157 (CCDC157) from Homo sapiens (Human).